A 637-amino-acid chain; its full sequence is Protein arginine N-methyltransferase 5 (637 aa).

Ala2 carries the N-acetylalanine; in Protein arginine N-methyltransferase 5, N-terminally processed modification. A TIM barrel region spans residues 13 to 292 (RVSSGRDLNC…YLEYLSQNRP (280 aa)). Positions 308 to 615 (LQSPLQPLMD…SNSKKVWYEW (308 aa)) constitute an SAM-dependent MTase PRMT-type domain. Residue Tyr324 coordinates S-adenosyl-L-methionine. Phe327 contributes to the a protein binding site. S-adenosyl-L-methionine contacts are provided by residues 333 to 334 (KY), Glu392, and 419 to 420 (DM). Residues Glu435 and Glu444 each contribute to the a protein site. Residues Glu435 and Glu444 each act as proton donor/acceptor in the active site. The beta barrel stretch occupies residues 465–637 (PGEYTSFLAP…PTGRSYTIGL (173 aa)). Residues 488–494 (REKDRDP) form a dimerization region.

It belongs to the class I-like SAM-binding methyltransferase superfamily. Protein arginine N-methyltransferase family. In terms of assembly, forms, at least, homodimers and homotetramers. Component of the methylosome complex, composed of PRMT5, WDR77 and CLNS1A. Found in a complex composed of PRMT5, WDR77 and RIOK1. RIOK1 and CLNS1A associate with PRMT5 in a mutually exclusive fashion, which allows the recruitment of distinct methylation substrates, such as nucleolin/NCL and Sm proteins, respectively. Interacts with PRDM1. Identified in a complex composed of methylosome and PRMT1 and ERH. Interacts with EGFR; methylates EGFR and stimulates EGFR-mediated ERK activation. Interacts with HOXA9. Interacts with SRGAP2. Found in a complex with COPRS, RUNX1 and CBFB. Interacts with CHTOP; the interaction symmetrically methylates CHTOP, but seems to require the presence of PRMT1. Interacts with EPB41L3; this modulates methylation of target proteins. Component of a high molecular weight E2F-pocket protein complex, CERC (cyclin E1 repressor complex). Associates with SWI/SNF remodeling complexes containing SMARCA2 and SMARCA4. Interacts with JAK2, SSTR1, SUPT5H, BRAF and with active RAF1. Interacts with LSM11, PRMT7 and SNRPD3. Interacts with COPRS; promoting its recruitment on histone H4. Interacts with CLNS1A/pICln. Identified in a complex with CLNS1A/pICln and Sm proteins. Interacts with RPS10. Interacts with WDR77. Interacts with IWS1. Interacts with CRY1. Interacts with POLR2A. Interacts with SMN1/SMN2. Interacts with LYAR; this interaction is direct. Interacts with TTC5/STRAP; this interaction is DNA damage-dependent and promotes PRMT5 interaction with p53/TP53. Interacts with p53/TP53 in response to DNA damage; the interaction is TTC5/STRAP dependent. Interacts with FAM47E; the interaction is direct, promotes PRMT5 localization to chromatin, and does not disrupt its association with WDR77 or STUB1. Interacts with TDRD6. Interacts with STUB1. Interacts with MBD2. Does not interact with MBD3. Ubiquitous.

It is found in the cytoplasm. It localises to the nucleus. The protein localises to the chromosome. Its subcellular location is the golgi apparatus. It carries out the reaction L-arginyl-[protein] + 2 S-adenosyl-L-methionine = N(omega),N(omega)'-dimethyl-L-arginyl-[protein] + 2 S-adenosyl-L-homocysteine + 2 H(+). With respect to regulation, activity is increased by EGF, HGF, FGF1 or FGF2 treatments, and slightly decreased by NGF treatment. Arginine methyltransferase that can both catalyze the formation of omega-N monomethylarginine (MMA) and symmetrical dimethylarginine (sDMA), with a preference for the formation of MMA. Specifically mediates the symmetrical dimethylation of arginine residues in the small nuclear ribonucleoproteins Sm D1 (SNRPD1) and Sm D3 (SNRPD3); such methylation being required for the assembly and biogenesis of snRNP core particles. Methylates SUPT5H and may regulate its transcriptional elongation properties. May methylate the N-terminal region of MBD2. Mono- and dimethylates arginine residues of myelin basic protein (MBP) in vitro. May play a role in cytokine-activated transduction pathways. Negatively regulates cyclin E1 promoter activity and cellular proliferation. Methylates histone H2A and H4 'Arg-3' during germ cell development. Methylates histone H3 'Arg-8', which may repress transcription. Methylates the Piwi proteins (PIWIL1, PIWIL2 and PIWIL4), methylation of Piwi proteins being required for the interaction with Tudor domain-containing proteins and subsequent localization to the meiotic nuage. Methylates RPS10. Attenuates EGF signaling through the MAPK1/MAPK3 pathway acting at 2 levels. First, monomethylates EGFR; this enhances EGFR 'Tyr-1197' phosphorylation and PTPN6 recruitment, eventually leading to reduced SOS1 phosphorylation. Second, methylates RAF1 and probably BRAF, hence destabilizing these 2 signaling proteins and reducing their catalytic activity. Required for induction of E-selectin and VCAM-1, on the endothelial cells surface at sites of inflammation. Methylates HOXA9. Methylates and regulates SRGAP2 which is involved in cell migration and differentiation. Acts as a transcriptional corepressor in CRY1-mediated repression of the core circadian component PER1 by regulating the H4R3 dimethylation at the PER1 promoter. Methylates GM130/GOLGA2, regulating Golgi ribbon formation. Methylates H4R3 in genes involved in glioblastomagenesis in a CHTOP- and/or TET1-dependent manner. Symmetrically methylates POLR2A, a modification that allows the recruitment to POLR2A of proteins including SMN1/SMN2 and SETX. This is required for resolving RNA-DNA hybrids created by RNA polymerase II, that form R-loop in transcription terminal regions, an important step in proper transcription termination. Along with LYAR, binds the promoter of gamma-globin HBG1/HBG2 and represses its expression. Symmetrically methylates NCL. Methylates p53/TP53; methylation might possibly affect p53/TP53 target gene specificity. Involved in spliceosome maturation and mRNA splicing in prophase I spermatocytes through the catalysis of the symmetrical arginine dimethylation of SNRPB (small nuclear ribonucleoprotein-associated protein) and the interaction with tudor domain-containing protein TDRD6. In Homo sapiens (Human), this protein is Protein arginine N-methyltransferase 5 (PRMT5).